Reading from the N-terminus, the 342-residue chain is Dihydroorotate dehydrogenase (quinone) (342 aa).

Residues 65–69 and threonine 89 contribute to the FMN site; that span reads AGLDK. Substrate is bound at residue lysine 69. 114-118 provides a ligand contact to substrate; that stretch reads NRMGF. Asparagine 142 and asparagine 175 together coordinate FMN. Asparagine 175 is a binding site for substrate. Serine 178 (nucleophile) is an active-site residue. Position 180 (asparagine 180) interacts with substrate. Positions 220 and 248 each coordinate FMN. Residue 249–250 participates in substrate binding; the sequence is NT. FMN is bound by residues glycine 271, glycine 300, and 321 to 322; that span reads YT.

Belongs to the dihydroorotate dehydrogenase family. Type 2 subfamily. As to quaternary structure, monomer. Requires FMN as cofactor.

The protein localises to the cell membrane. It carries out the reaction (S)-dihydroorotate + a quinone = orotate + a quinol. It participates in pyrimidine metabolism; UMP biosynthesis via de novo pathway; orotate from (S)-dihydroorotate (quinone route): step 1/1. Functionally, catalyzes the conversion of dihydroorotate to orotate with quinone as electron acceptor. The protein is Dihydroorotate dehydrogenase (quinone) of Burkholderia pseudomallei (strain K96243).